Reading from the N-terminus, the 433-residue chain is GTPase Der (433 aa).

2 EngA-type G domains span residues 5 to 167 (KKVL…GEAN) and 174 to 349 (IKVG…DQLE). GTP-binding positions include 11–18 (GRPNVGKS), 58–62 (DTGGF), 119–122 (NKVD), 180–187 (GKPNSGKS), 227–231 (DTAGI), and 292–295 (SKWD). The KH-like domain occupies 350–429 (FKTSTPDLNK…PILVELREKI (80 aa)).

It belongs to the TRAFAC class TrmE-Era-EngA-EngB-Septin-like GTPase superfamily. EngA (Der) GTPase family. In terms of assembly, associates with the 50S ribosomal subunit.

Functionally, GTPase that plays an essential role in the late steps of ribosome biogenesis. The sequence is that of GTPase Der from Borreliella afzelii (strain PKo) (Borrelia afzelii).